Here is a 620-residue protein sequence, read N- to C-terminus: Preterminal protein (620 aa).

Positions 356–365 match the Nuclear localization signal motif; the sequence is RLPMRRRRRR. S545 carries the post-translational modification O-(5'-phospho-DNA)-serine.

It belongs to the adenoviridae terminal protein family. As to quaternary structure, heterodimer with the polymerase; this heterodimer binds to bp 9 to 18 of the genome. Interacts with host POU2F1; POU2F1 binds to the auxiliary sequences in the inverted terminal repeats and tethers the pTP-POL heterodimer to the origin DNA thereby participating in the assembly of the pre-initiation complex (POL-TP-DBP-NFIA-POU2F1). Post-translationally, preterminal protein is used to replicate viral genome, upon genomic encapsidation it is processed first into iTP and finally into TP by adenovirus protease.

Its subcellular location is the host nucleus matrix. In terms of biological role, protein covalently bound to the viral DNA that acts as a primer for viral genomic replication by DNA strand displacement. Assembles on the viral origin of replication in an initiation complex with viral polymerase, DBP, host NFIA and host POU2F1/OCT1. During initiation, the polymerase covalently couples the first dCTP with Ser-580 of pTP. The terminal protein stimulates the template activity over 20 fold compared to protein-free templates. Neo-synthesized viral genomes are linked to two preterminal proteins, one for each 5' end. These new genomes are encapsidated in the nucleus, and during capsid maturation by viral protease, preterminal protein is first cleaved into intermediary (iTP), then into mature TP. May play a role in host nuclear matrix localization of genomic DNA. The sequence is that of Preterminal protein from Bovine adenovirus 2 (BAdV-2).